The sequence spans 270 residues: 4-hydroxy-tetrahydrodipicolinate reductase (270 aa).

NAD(+) is bound by residues 9–14 (GAGGRM) and Glu-35. Arg-36 contacts NADP(+). Residues 99–101 (GTT) and 123–126 (ASNF) each bind NAD(+). His-156 (proton donor/acceptor) is an active-site residue. His-157 is a binding site for (S)-2,3,4,5-tetrahydrodipicolinate. The active-site Proton donor is Lys-160. Residue 166–167 (GT) participates in (S)-2,3,4,5-tetrahydrodipicolinate binding.

This sequence belongs to the DapB family.

The protein localises to the cytoplasm. It carries out the reaction (S)-2,3,4,5-tetrahydrodipicolinate + NAD(+) + H2O = (2S,4S)-4-hydroxy-2,3,4,5-tetrahydrodipicolinate + NADH + H(+). The catalysed reaction is (S)-2,3,4,5-tetrahydrodipicolinate + NADP(+) + H2O = (2S,4S)-4-hydroxy-2,3,4,5-tetrahydrodipicolinate + NADPH + H(+). Its pathway is amino-acid biosynthesis; L-lysine biosynthesis via DAP pathway; (S)-tetrahydrodipicolinate from L-aspartate: step 4/4. Catalyzes the conversion of 4-hydroxy-tetrahydrodipicolinate (HTPA) to tetrahydrodipicolinate. The polypeptide is 4-hydroxy-tetrahydrodipicolinate reductase (Haemophilus influenzae (strain PittEE)).